A 376-amino-acid chain; its full sequence is E3 ubiquitin-protein ligase RNF34 (376 aa).

An FYVE-type zinc finger spans residues 56 to 107 (EGPNIVCKACGLSFSVFRKKHVCCDCKKDFCSLCSVSQENLRRCSTCHLLQE). The 20-residue stretch at 115 to 134 (LMRLKVKDLRQYLLLRNIPT) folds into the SAP 1 domain. At S169 the chain carries Phosphoserine. Positions 216 to 256 (IASANTDDDDDDDDDDDDDEDDDDEQEEEEQNPGLSKKKAR) are disordered. Residues 221–246 (TDDDDDDDDDDDDDEDDDDEQEEEEQ) show a composition bias toward acidic residues. Residues S258 and S260 each carry the phosphoserine modification. Residues 268–282 (VEGMSVRQLKEILAR) form the SAP 2 domain. The RING-type zinc finger occupies 329-364 (CRICMDAVIDCVLLECGHMVTCTKCGKRMSECPICR).

As to quaternary structure, interacts with CASP8 and CASP10. Interacts with p53/TP53; involved in p53/TP53 ubiquitination. Interacts (via RING-type zinc finger) with MDM2; the interaction stabilizes MDM2. Interacts (via RING-type zinc finger) with PPARGC1A. Interacts with NOD1. In terms of processing, autoubiquitinated (in vitro). Post-translationally, proteolytically cleaved by caspases upon induction of apoptosis by TNF.

The protein localises to the cell membrane. It is found in the endomembrane system. Its subcellular location is the nucleus. The protein resides in the nucleus speckle. It localises to the cytoplasm. The protein localises to the cytosol. It catalyses the reaction S-ubiquitinyl-[E2 ubiquitin-conjugating enzyme]-L-cysteine + [acceptor protein]-L-lysine = [E2 ubiquitin-conjugating enzyme]-L-cysteine + N(6)-ubiquitinyl-[acceptor protein]-L-lysine.. Its pathway is protein modification; protein ubiquitination. Its function is as follows. E3 ubiquitin-protein ligase that regulates several biological processes through the ubiquitin-mediated proteasomal degradation of various target proteins. Ubiquitinates the caspases CASP8 and CASP10, promoting their proteasomal degradation, to negatively regulate cell death downstream of death domain receptors in the extrinsic pathway of apoptosis. May mediate 'Lys-48'-linked polyubiquitination of RIPK1 and its subsequent proteasomal degradation thereby indirectly regulating the tumor necrosis factor-mediated signaling pathway. Negatively regulates p53/TP53 through its direct ubiquitination and targeting to proteasomal degradation. Indirectly, may also negatively regulate p53/TP53 through ubiquitination and degradation of SFN. Mediates PPARGC1A proteasomal degradation probably through ubiquitination thereby indirectly regulating the metabolism of brown fat cells. Possibly involved in innate immunity, through 'Lys-48'-linked polyubiquitination of NOD1 and its subsequent proteasomal degradation. The sequence is that of E3 ubiquitin-protein ligase RNF34 from Mus musculus (Mouse).